Here is a 505-residue protein sequence, read N- to C-terminus: Flagellin (505 aa).

It belongs to the bacterial flagellin family.

It is found in the secreted. Its subcellular location is the bacterial flagellum. Functionally, flagellin is the subunit protein which polymerizes to form the filaments of bacterial flagella. The protein is Flagellin (fliC) of Salmonella moscow.